Here is a 468-residue protein sequence, read N- to C-terminus: Chromosomal replication initiator protein DnaA (468 aa).

The tract at residues methionine 1–alanine 84 is domain I, interacts with DnaA modulators. Residues arginine 81–valine 113 are disordered. Residues alanine 84 to serine 131 form a domain II region. Residues asparagine 132 to alanine 348 are domain III, AAA+ region. Positions 176, 178, 179, and 180 each coordinate ATP. A domain IV, binds dsDNA region spans residues asparagine 349 to serine 468.

The protein belongs to the DnaA family. Oligomerizes as a right-handed, spiral filament on DNA at oriC.

The protein localises to the cytoplasm. Functionally, plays an essential role in the initiation and regulation of chromosomal replication. ATP-DnaA binds to the origin of replication (oriC) to initiate formation of the DNA replication initiation complex once per cell cycle. Binds the DnaA box (a 9 base pair repeat at the origin) and separates the double-stranded (ds)DNA. Forms a right-handed helical filament on oriC DNA; dsDNA binds to the exterior of the filament while single-stranded (ss)DNA is stabiized in the filament's interior. The ATP-DnaA-oriC complex binds and stabilizes one strand of the AT-rich DNA unwinding element (DUE), permitting loading of DNA polymerase. After initiation quickly degrades to an ADP-DnaA complex that is not apt for DNA replication. Binds acidic phospholipids. The protein is Chromosomal replication initiator protein DnaA of Vibrio vulnificus (strain CMCP6).